Here is a 417-residue protein sequence, read N- to C-terminus: Probable glucuronosyltransferase GUT1 (417 aa).

Residues methionine 1–proline 15 lie on the Cytoplasmic side of the membrane. The chain crosses the membrane as a helical; Signal-anchor for type II membrane protein span at residues leucine 16–alanine 36. Topologically, residues alanine 37–tryptophan 417 are lumenal. N-linked (GlcNAc...) asparagine glycans are attached at residues asparagine 144 and asparagine 405.

It belongs to the glycosyltransferase 47 family.

It localises to the golgi apparatus membrane. Its function is as follows. Involved in the synthesis of glucuronoxylan hemicellulose in secondary cell walls. This chain is Probable glucuronosyltransferase GUT1 (GUT1), found in Oryza sativa subsp. japonica (Rice).